Consider the following 500-residue polypeptide: Glutamate--tRNA ligase (500 aa).

The 'HIGH' region signature appears at 13 to 23; sequence PSPTGTPHVGM. The 'KMSKS' region signature appears at 258-262; that stretch reads KLSKR. Lysine 261 contributes to the ATP binding site.

It belongs to the class-I aminoacyl-tRNA synthetase family. Glutamate--tRNA ligase type 1 subfamily. In terms of assembly, monomer.

It localises to the cytoplasm. The enzyme catalyses tRNA(Glu) + L-glutamate + ATP = L-glutamyl-tRNA(Glu) + AMP + diphosphate. Functionally, catalyzes the attachment of glutamate to tRNA(Glu) in a two-step reaction: glutamate is first activated by ATP to form Glu-AMP and then transferred to the acceptor end of tRNA(Glu). This chain is Glutamate--tRNA ligase, found in Corynebacterium jeikeium (strain K411).